Consider the following 134-residue polypeptide: Small ribosomal subunit protein bS6 (134 aa).

Positions 113-122 (NKDIKEKEQP) are enriched in basic and acidic residues. The disordered stretch occupies residues 113–134 (NKDIKEKEQPSESNVDADLKVN).

The protein belongs to the bacterial ribosomal protein bS6 family.

In terms of biological role, binds together with bS18 to 16S ribosomal RNA. The polypeptide is Small ribosomal subunit protein bS6 (Borrelia recurrentis (strain A1)).